A 55-amino-acid polypeptide reads, in one-letter code: Male-specific sperm protein Mst84Dc (55 aa).

This sequence belongs to the MST(3)CGP family. In terms of tissue distribution, testis.

This chain is Male-specific sperm protein Mst84Dc (Mst84Dc), found in Drosophila melanogaster (Fruit fly).